The primary structure comprises 414 residues: 3-oxo-isoapionate-4-phosphate transcarboxylase/hydrolase (414 aa).

3 residues coordinate Mg(2+): Lys180, Asp182, and Glu183. At Lys180 the chain carries N6-carboxylysine.

This sequence belongs to the RuBisCO large chain family. Mg(2+) is required as a cofactor.

The enzyme catalyses 3-oxoisoapionate 4-phosphate + H2O = (2R)-3-phosphoglycerate + glycolate + H(+). It participates in carbohydrate metabolism. Involved in catabolism of D-apiose. Catalyzes the conversion of 3-oxo-isoapionate 4-phosphate to 3-phosphoglycerate and glycolate. The protein is 3-oxo-isoapionate-4-phosphate transcarboxylase/hydrolase of Xanthobacter autotrophicus (strain ATCC BAA-1158 / Py2).